The following is a 62-amino-acid chain: High-potential iron-sulfur protein (62 aa).

Cysteine 22, cysteine 25, cysteine 40, and cysteine 55 together coordinate [4Fe-4S] cluster.

This sequence belongs to the high-potential iron-sulfur protein (HiPIP) family. In terms of assembly, homodimer.

Its function is as follows. Specific class of high-redox-potential 4Fe-4S ferredoxins. Functions in anaerobic electron transport in most purple and in some other photosynthetic bacteria and in at least one genus (Paracoccus) of halophilic, denitrifying bacteria. In Rhodocyclus tenuis (Rhodospirillum tenue), this protein is High-potential iron-sulfur protein (hip).